The sequence spans 420 residues: Putative T-box protein 33 (420 aa).

The T-box DNA-binding region spans 93 to 291 (LWKELHYLSN…ANPTSRGDAK (199 aa)). Over residues 395–412 (SPPLQPTATSPEASQNQI) the composition is skewed to polar residues. The tract at residues 395–420 (SPPLQPTATSPEASQNQIKLEMNQYM) is disordered.

The protein localises to the nucleus. The protein is Putative T-box protein 33 (tbx-33) of Caenorhabditis elegans.